The following is a 425-amino-acid chain: UDP-N-acetylglucosamine 1-carboxyvinyltransferase (425 aa).

31-32 (KN) serves as a coordination point for phosphoenolpyruvate. Position 100 (R100) interacts with UDP-N-acetyl-alpha-D-glucosamine. Catalysis depends on C124, which acts as the Proton donor. 2-(S-cysteinyl)pyruvic acid O-phosphothioketal is present on C124. UDP-N-acetyl-alpha-D-glucosamine-binding positions include 129 to 133 (RPIDQ), 170 to 172 (TVT), D311, and I333.

The protein belongs to the EPSP synthase family. MurA subfamily.

The protein localises to the cytoplasm. The catalysed reaction is phosphoenolpyruvate + UDP-N-acetyl-alpha-D-glucosamine = UDP-N-acetyl-3-O-(1-carboxyvinyl)-alpha-D-glucosamine + phosphate. Its pathway is cell wall biogenesis; peptidoglycan biosynthesis. Its function is as follows. Cell wall formation. Adds enolpyruvyl to UDP-N-acetylglucosamine. The protein is UDP-N-acetylglucosamine 1-carboxyvinyltransferase of Aquifex aeolicus (strain VF5).